Consider the following 242-residue polypeptide: N-acetylmuramate alpha-1-phosphate uridylyltransferase (242 aa).

Residues 16-18 (GTR) and K28 contribute to the UTP site. N113 contributes to the substrate binding site. Mg(2+) is bound at residue D115. D158 contacts substrate.

The protein belongs to the nucleotidyltransferase MurU family. Monomer. Mg(2+) is required as a cofactor.

It catalyses the reaction N-acetyl-alpha-D-muramate 1-phosphate + UDP + H(+) = UDP-N-acetyl-alpha-D-muramate + phosphate. It functions in the pathway cell wall biogenesis; peptidoglycan recycling. Catalyzes the formation of UDP-N-acetylmuramate (UDP-MurNAc), a crucial precursor of the bacterial peptidoglycan cell wall, from UTP and MurNAc-alpha-1P. Is likely involved in peptidoglycan recycling as part of a cell wall recycling pathway that bypasses de novo biosynthesis of the peptidoglycan precursor UDP-MurNAc. Is able to complement the fosfomycin sensitivity phenotype of a P.putida mutant lacking murU. In Caulobacter vibrioides (strain ATCC 19089 / CIP 103742 / CB 15) (Caulobacter crescentus), this protein is N-acetylmuramate alpha-1-phosphate uridylyltransferase.